Reading from the N-terminus, the 332-residue chain is L-lactate dehydrogenase A chain (332 aa).

NAD(+) is bound by residues 29 to 57 (GAVGMACAISILMKDLADELALVDVMEDK) and Arg-99. The substrate site is built by Arg-106, Asn-138, and Arg-169. Asn-138 contacts NAD(+). The Proton acceptor role is filled by His-193. Thr-248 contacts substrate.

This sequence belongs to the LDH/MDH superfamily. LDH family. In terms of assembly, homotetramer.

It is found in the cytoplasm. It carries out the reaction (S)-lactate + NAD(+) = pyruvate + NADH + H(+). It functions in the pathway fermentation; pyruvate fermentation to lactate; (S)-lactate from pyruvate: step 1/1. In terms of biological role, interconverts simultaneously and stereospecifically pyruvate and lactate with concomitant interconversion of NADH and NAD(+). The chain is L-lactate dehydrogenase A chain (LDHA) from Sceloporus undulatus (Eastern fence lizard).